The sequence spans 102 residues: Small ribosomal subunit protein uS10 (102 aa).

The protein belongs to the universal ribosomal protein uS10 family. As to quaternary structure, part of the 30S ribosomal subunit.

In terms of biological role, involved in the binding of tRNA to the ribosomes. This chain is Small ribosomal subunit protein uS10, found in Acidithiobacillus ferrooxidans (strain ATCC 53993 / BNL-5-31) (Leptospirillum ferrooxidans (ATCC 53993)).